A 203-amino-acid chain; its full sequence is Ribonuclease HII (203 aa).

One can recognise an RNase H type-2 domain in the interval 18-203 (GHYAGVDEVG…SFRPVREALA (186 aa)). Residues D24, E25, and D116 each contribute to the a divalent metal cation site.

This sequence belongs to the RNase HII family. Requires Mn(2+) as cofactor. Mg(2+) serves as cofactor.

The protein resides in the cytoplasm. The catalysed reaction is Endonucleolytic cleavage to 5'-phosphomonoester.. Its function is as follows. Endonuclease that specifically degrades the RNA of RNA-DNA hybrids. This chain is Ribonuclease HII, found in Shewanella halifaxensis (strain HAW-EB4).